Here is a 110-residue protein sequence, read N- to C-terminus: Cuticle protein 13 (110 aa).

The protein is Cuticle protein 13 of Limulus polyphemus (Atlantic horseshoe crab).